A 145-amino-acid polypeptide reads, in one-letter code: Large ribosomal subunit protein uL11 (145 aa).

Belongs to the universal ribosomal protein uL11 family. In terms of assembly, part of the ribosomal stalk of the 50S ribosomal subunit. Interacts with L10 and the large rRNA to form the base of the stalk. L10 forms an elongated spine to which L12 dimers bind in a sequential fashion forming a multimeric L10(L12)X complex. One or more lysine residues are methylated.

In terms of biological role, forms part of the ribosomal stalk which helps the ribosome interact with GTP-bound translation factors. The polypeptide is Large ribosomal subunit protein uL11 (Aquifex aeolicus (strain VF5)).